A 972-amino-acid chain; its full sequence is Hemoglobin and hemoglobin-haptoglobin-binding protein (972 aa).

An N-terminal signal peptide occupies residues 1–22 (MKANKLSAITLCILGYAHTVYA). The TonB box signature appears at 32-39 (ETIVVSSE). The TBDR plug domain occupies 38 to 167 (SEDDSVHNKN…LGGTVSFESK (130 aa)). The 798-residue stretch at 175 to 972 (DKNYHFGYKT…NFRVNAEITF (798 aa)) folds into the TBDR beta-barrel domain. The short motif at 955-972 (KRFNAPGRNFRVNAEITF) is the TonB C-terminal box element.

The protein belongs to the TonB-dependent receptor family. Hemoglobin/haptoglobin binding protein subfamily.

Its subcellular location is the cell outer membrane. In terms of biological role, acts as a receptor for hemoglobin or the hemoglobin/haptoglobin complex of the host and is required for heme uptake. May be involved in virulence. This chain is Hemoglobin and hemoglobin-haptoglobin-binding protein, found in Haemophilus ducreyi (strain 35000HP / ATCC 700724).